We begin with the raw amino-acid sequence, 291 residues long: 3-hydroxy-5-phosphonooxypentane-2,4-dione thiolase (291 aa).

The active-site Schiff-base intermediate with substrate is the lysine 203.

Belongs to the DeoC/FbaB aldolase family. As to quaternary structure, homodecamer.

The protein localises to the cytoplasm. It carries out the reaction dihydroxyacetone phosphate + acetyl-CoA = 3-hydroxy-2,4-dioxopentyl phosphate + CoA. Involved in the degradation of phospho-AI-2, thereby terminating induction of the lsr operon and closing the AI-2 signaling cycle. Catalyzes the transfer of an acetyl moiety from 3-hydroxy-5-phosphonooxypentane-2,4-dione to CoA to form glycerone phosphate and acetyl-CoA. This is 3-hydroxy-5-phosphonooxypentane-2,4-dione thiolase from Salmonella typhimurium (strain LT2 / SGSC1412 / ATCC 700720).